Reading from the N-terminus, the 600-residue chain is Elongation factor 4 (600 aa).

One can recognise a tr-type G domain in the interval 4 to 186 (SKIRNFSIIA…AIVEKIPSPS (183 aa)). GTP contacts are provided by residues 16-21 (DHGKST) and 133-136 (NKID).

It belongs to the TRAFAC class translation factor GTPase superfamily. Classic translation factor GTPase family. LepA subfamily.

It localises to the cell membrane. The catalysed reaction is GTP + H2O = GDP + phosphate + H(+). In terms of biological role, required for accurate and efficient protein synthesis under certain stress conditions. May act as a fidelity factor of the translation reaction, by catalyzing a one-codon backward translocation of tRNAs on improperly translocated ribosomes. Back-translocation proceeds from a post-translocation (POST) complex to a pre-translocation (PRE) complex, thus giving elongation factor G a second chance to translocate the tRNAs correctly. Binds to ribosomes in a GTP-dependent manner. This is Elongation factor 4 from Mycoplasma mycoides subsp. mycoides SC (strain CCUG 32753 / NCTC 10114 / PG1).